The sequence spans 601 residues: ATP-dependent lipid A-core flippase (601 aa).

4 helical membrane passes run 27 to 47, 83 to 103, 174 to 194, and 267 to 287; these read IGLFLISIVGFLIFASTQPML, LLIVLIAAWQGLGSYLGNYFL, LLWMNWRLTLVMIAILPLIAV, and PLLQLVIYSAMAVLMFLVLYL. Residues 31-322 enclose the ABC transmembrane type-1 domain; the sequence is LISIVGFLIF…LSEVSSTIQK (292 aa). Positions 354 to 590 constitute an ABC transporter domain; sequence LEVRNLSFTY…NGYYSRLHAM (237 aa). 388–395 lines the ATP pocket; it reads GRSGSGKS.

The protein belongs to the ABC transporter superfamily. Lipid exporter (TC 3.A.1.106) family. In terms of assembly, homodimer.

Its subcellular location is the cell inner membrane. The catalysed reaction is ATP + H2O + lipid A-core oligosaccharideSide 1 = ADP + phosphate + lipid A-core oligosaccharideSide 2.. Its function is as follows. Involved in lipopolysaccharide (LPS) biosynthesis. Translocates lipid A-core from the inner to the outer leaflet of the inner membrane. Transmembrane domains (TMD) form a pore in the inner membrane and the ATP-binding domain (NBD) is responsible for energy generation. In Pseudomonas fluorescens (strain ATCC BAA-477 / NRRL B-23932 / Pf-5), this protein is ATP-dependent lipid A-core flippase.